The sequence spans 79 residues: UPF0154 protein SAK_1616 (79 aa).

Residues 5–25 traverse the membrane as a helical segment; the sequence is IWILLIIVALFGGLVGGIFIA.

Belongs to the UPF0154 family.

It is found in the cell membrane. The protein is UPF0154 protein SAK_1616 of Streptococcus agalactiae serotype Ia (strain ATCC 27591 / A909 / CDC SS700).